We begin with the raw amino-acid sequence, 350 residues long: Hydroxymethylglutaryl-CoA synthase (350 aa).

Residue aspartate 30 coordinates (3S)-3-hydroxy-3-methylglutaryl-CoA. The Proton donor/acceptor role is filled by glutamate 82. 4 residues coordinate (3S)-3-hydroxy-3-methylglutaryl-CoA: cysteine 114, serine 155, threonine 203, and histidine 236. Cysteine 114 serves as the catalytic Acyl-thioester intermediate. Residue histidine 236 is the Proton donor/acceptor of the active site. Residue arginine 241 participates in CoA binding. (3S)-3-hydroxy-3-methylglutaryl-CoA-binding residues include arginine 245, asparagine 268, and serine 298.

Belongs to the thiolase-like superfamily. Archaeal HMG-CoA synthase family. In terms of assembly, interacts with acetoacetyl-CoA thiolase that catalyzes the precedent step in the pathway and with a DUF35 protein. The acetoacetyl-CoA thiolase/HMG-CoA synthase complex channels the intermediate via a fused CoA-binding site, which allows for efficient coupling of the endergonic thiolase reaction with the exergonic HMGCS reaction.

It catalyses the reaction acetoacetyl-CoA + acetyl-CoA + H2O = (3S)-3-hydroxy-3-methylglutaryl-CoA + CoA + H(+). Its pathway is metabolic intermediate biosynthesis; (R)-mevalonate biosynthesis; (R)-mevalonate from acetyl-CoA: step 2/3. Catalyzes the condensation of acetyl-CoA with acetoacetyl-CoA to form 3-hydroxy-3-methylglutaryl-CoA (HMG-CoA). Functions in the mevalonate (MVA) pathway leading to isopentenyl diphosphate (IPP), a key precursor for the biosynthesis of isoprenoid compounds that are building blocks of archaeal membrane lipids. The protein is Hydroxymethylglutaryl-CoA synthase of Pyrobaculum calidifontis (strain DSM 21063 / JCM 11548 / VA1).